The following is a 140-amino-acid chain: MLGEFRQFIARGNVMDLAVGVIIGGAFATITGSLTEDVIMPLVGALFGGVDFSNRFILLGSVPDGMSATDYAALKEAGVAMIGYGAFVTAVINFLILAFIIFLLVRWVNKVVRKPEADASPAGPSEVDLLTEIRDELRRK.

A run of 2 helical transmembrane segments spans residues 14–34 and 85–105; these read VMDLAVGVIIGGAFATITGSL and GAFVTAVINFLILAFIIFLLV.

It belongs to the MscL family. As to quaternary structure, homopentamer.

It localises to the cell inner membrane. Its function is as follows. Channel that opens in response to stretch forces in the membrane lipid bilayer. May participate in the regulation of osmotic pressure changes within the cell. The chain is Large-conductance mechanosensitive channel from Sphingopyxis alaskensis (strain DSM 13593 / LMG 18877 / RB2256) (Sphingomonas alaskensis).